We begin with the raw amino-acid sequence, 323 residues long: UDP-N-acetylenolpyruvoylglucosamine reductase (323 aa).

In terms of domain architecture, FAD-binding PCMH-type spans 33-214; sequence IGGPAEALFC…LSAVFTLTHG (182 aa). The active-site Proton donor is the S243. The active site involves E315.

Belongs to the MurB family. The cofactor is FAD.

The protein resides in the cytoplasm. The catalysed reaction is UDP-N-acetyl-alpha-D-muramate + NADP(+) = UDP-N-acetyl-3-O-(1-carboxyvinyl)-alpha-D-glucosamine + NADPH + H(+). It participates in cell wall biogenesis; peptidoglycan biosynthesis. Functionally, cell wall formation. This is UDP-N-acetylenolpyruvoylglucosamine reductase from Treponema denticola (strain ATCC 35405 / DSM 14222 / CIP 103919 / JCM 8153 / KCTC 15104).